The sequence spans 296 residues: Glycine--tRNA ligase alpha subunit (296 aa).

Belongs to the class-II aminoacyl-tRNA synthetase family. As to quaternary structure, tetramer of two alpha and two beta subunits.

It is found in the cytoplasm. It catalyses the reaction tRNA(Gly) + glycine + ATP = glycyl-tRNA(Gly) + AMP + diphosphate. This chain is Glycine--tRNA ligase alpha subunit, found in Francisella tularensis subsp. novicida (strain U112).